The primary structure comprises 473 residues: Reticulon-4 receptor (473 aa).

An N-terminal signal peptide occupies residues 1-26 (MKRASSGGSRLLAWVLWLQAWRVATP). 2 disulfides stabilise this stretch: Cys-27–Cys-33 and Cys-31–Cys-43. An LRRNT domain is found at 27–57 (CPGACVCYNEPKVTTSCPQQGLQAVPTGIPA). 9 LRR repeats span residues 56–79 (PASS…SFQS), 80–103 (CRNL…AFTG), 105–128 (TLLE…TFRG), 129–152 (LGHL…LFRG), 153–176 (LAAL…TFRD), 178–200 (GNLT…AFRG), 202–224 (HSLD…AFRD), 225–248 (LGRL…VLVP), and 250–273 (RSLQ…PLWA). An N-linked (GlcNAc...) asparagine glycan is attached at Asn-82. An LRRCT domain is found at 260–310 (NPWVCDCRARPLWAWLQKFRGSSSEVPCNLPQRLAGRDLKRLAASDLEGCA). Disulfide bonds link Cys-264-Cys-287, Cys-266-Cys-335, and Cys-309-Cys-336. The interval 346–446 (VLEPGRPASA…GSSGTGDAEG (101 aa)) is disordered. Asn-372 carries an N-linked (GlcNAc...) asparagine glycan. Over residues 413-429 (PRRRPGCSRKNRTRSHC) the composition is skewed to basic residues. The span at 434–445 (AGSGSSGTGDAE) shows a compositional bias: gly residues. The GPI-anchor amidated serine moiety is linked to residue Ser-447. Positions 448–473 (GALPALACSLAPLGLALVLWTVLGPC) are cleaved as a propeptide — removed in mature form.

Belongs to the Nogo receptor family. Homodimer. Interacts with MAG. Interacts with RTN4 and OMG. Interacts with LINGO1 and NGFR. Interacts with KIAA0319L. Interacts with OLFM1; this inhibits interaction with LINGO1 and NGFR. Post-translationally, N-glycosylated. O-glycosylated. Contains terminal sialic acid groups on its glycan chains. In terms of tissue distribution, detected in embryonic cerebellum, in spinal cord motor neurons and in dorsal root ganglia. Detected in adult brain, in neocortex, hippocampus, striatum, thalamus and dorsal root ganglion neurons (at protein level).

Its subcellular location is the cell membrane. The protein localises to the membrane raft. It localises to the cell projection. The protein resides in the dendrite. It is found in the perikaryon. Its subcellular location is the axon. Receptor for RTN4, OMG and MAG. Functions as a receptor for the sialylated gangliosides GT1b and GM1. Besides, functions as a receptor for chondroitin sulfate proteoglycans. Can also bind heparin. Intracellular signaling cascades are triggered via the coreceptor NGFR. Signaling mediates activation of Rho and downstream reorganization of the actin cytoskeleton. Mediates axonal growth inhibition. May play a role in regulating axon regeneration and neuronal plasticity in the adult central nervous system. Plays a role in postnatal brain development. Required for normal axon migration across the brain midline and normal formation of the corpus callosum. Protects motoneurons against apoptosis; protection against apoptosis is probably mediated via interaction with MAG. Acts in conjunction with RTN4 and LINGO1 in regulating neuronal precursor cell motility during cortical development. Like other family members, plays a role in restricting the number dendritic spines and the number of synapses that are formed during brain development. In Rattus norvegicus (Rat), this protein is Reticulon-4 receptor (Rtn4r).